Consider the following 79-residue polypeptide: Acyl carrier protein (79 aa).

The Carrier domain maps to 2–77 (SDTAERVKKI…DAIDFINQKT (76 aa)). An O-(pantetheine 4'-phosphoryl)serine modification is found at Ser37.

This sequence belongs to the acyl carrier protein (ACP) family. 4'-phosphopantetheine is transferred from CoA to a specific serine of apo-ACP by AcpS. This modification is essential for activity because fatty acids are bound in thioester linkage to the sulfhydryl of the prosthetic group.

The protein localises to the cytoplasm. It functions in the pathway lipid metabolism; fatty acid biosynthesis. Its function is as follows. Carrier of the growing fatty acid chain in fatty acid biosynthesis. In Rhodospirillum centenum (strain ATCC 51521 / SW), this protein is Acyl carrier protein.